The sequence spans 392 residues: Formate-dependent phosphoribosylglycinamide formyltransferase (392 aa).

N(1)-(5-phospho-beta-D-ribosyl)glycinamide-binding positions include 22-23 (EL) and E82. ATP is bound by residues R114, K155, 160 to 165 (SSGKGQ), 195 to 198 (EGVV), and E203. In terms of domain architecture, ATP-grasp spans 119–308 (RLAAEELQLP…EFALHVRAFL (190 aa)). Mg(2+) contacts are provided by E267 and E279. Residues D286, K355, and 362–363 (RR) contribute to the N(1)-(5-phospho-beta-D-ribosyl)glycinamide site.

It belongs to the PurK/PurT family. As to quaternary structure, homodimer.

It catalyses the reaction N(1)-(5-phospho-beta-D-ribosyl)glycinamide + formate + ATP = N(2)-formyl-N(1)-(5-phospho-beta-D-ribosyl)glycinamide + ADP + phosphate + H(+). It participates in purine metabolism; IMP biosynthesis via de novo pathway; N(2)-formyl-N(1)-(5-phospho-D-ribosyl)glycinamide from N(1)-(5-phospho-D-ribosyl)glycinamide (formate route): step 1/1. Involved in the de novo purine biosynthesis. Catalyzes the transfer of formate to 5-phospho-ribosyl-glycinamide (GAR), producing 5-phospho-ribosyl-N-formylglycinamide (FGAR). Formate is provided by PurU via hydrolysis of 10-formyl-tetrahydrofolate. This is Formate-dependent phosphoribosylglycinamide formyltransferase from Shigella sonnei (strain Ss046).